Consider the following 1024-residue polypeptide: Error-prone DNA polymerase (1024 aa).

The protein belongs to the DNA polymerase type-C family. DnaE2 subfamily.

It localises to the cytoplasm. The catalysed reaction is DNA(n) + a 2'-deoxyribonucleoside 5'-triphosphate = DNA(n+1) + diphosphate. In terms of biological role, DNA polymerase involved in damage-induced mutagenesis and translesion synthesis (TLS). It is not the major replicative DNA polymerase. The polypeptide is Error-prone DNA polymerase (Vibrio campbellii (strain ATCC BAA-1116)).